Consider the following 424-residue polypeptide: Enolase (424 aa).

(2R)-2-phosphoglycerate is bound at residue Q163. E205 serves as the catalytic Proton donor. The Mg(2+) site is built by D242, E285, and D312. (2R)-2-phosphoglycerate contacts are provided by K337, R366, S367, and K388. K337 (proton acceptor) is an active-site residue.

The protein belongs to the enolase family. Mg(2+) is required as a cofactor.

Its subcellular location is the cytoplasm. The protein resides in the secreted. It localises to the cell surface. It carries out the reaction (2R)-2-phosphoglycerate = phosphoenolpyruvate + H2O. It functions in the pathway carbohydrate degradation; glycolysis; pyruvate from D-glyceraldehyde 3-phosphate: step 4/5. Catalyzes the reversible conversion of 2-phosphoglycerate (2-PG) into phosphoenolpyruvate (PEP). It is essential for the degradation of carbohydrates via glycolysis. The sequence is that of Enolase from Sphingopyxis alaskensis (strain DSM 13593 / LMG 18877 / RB2256) (Sphingomonas alaskensis).